Consider the following 452-residue polypeptide: Pup--protein ligase (452 aa).

Residue E9 coordinates Mg(2+). R53 contacts ATP. Residue Y55 participates in Mg(2+) binding. D57 (proton acceptor) is an active-site residue. E63 serves as a coordination point for Mg(2+). Positions 66 and 419 each coordinate ATP.

Belongs to the Pup ligase/Pup deamidase family. Pup-conjugating enzyme subfamily.

The enzyme catalyses ATP + [prokaryotic ubiquitin-like protein]-L-glutamate + [protein]-L-lysine = ADP + phosphate + N(6)-([prokaryotic ubiquitin-like protein]-gamma-L-glutamyl)-[protein]-L-lysine.. Its pathway is protein degradation; proteasomal Pup-dependent pathway. The protein operates within protein modification; protein pupylation. Catalyzes the covalent attachment of the prokaryotic ubiquitin-like protein modifier Pup to the proteasomal substrate proteins, thereby targeting them for proteasomal degradation. This tagging system is termed pupylation. The ligation reaction involves the side-chain carboxylate of the C-terminal glutamate of Pup and the side-chain amino group of a substrate lysine. The protein is Pup--protein ligase of Mycobacterium sp. (strain JLS).